The chain runs to 346 residues: Ribosomal RNA small subunit methyltransferase H (346 aa).

S-adenosyl-L-methionine-binding positions include 46-48 (GGY), Asp-63, Phe-90, Asp-113, and Gln-120. The interval 270-346 (GGSAGSRHMP…LPETNELARS (77 aa)) is disordered.

Belongs to the methyltransferase superfamily. RsmH family.

It localises to the cytoplasm. The enzyme catalyses cytidine(1402) in 16S rRNA + S-adenosyl-L-methionine = N(4)-methylcytidine(1402) in 16S rRNA + S-adenosyl-L-homocysteine + H(+). Its function is as follows. Specifically methylates the N4 position of cytidine in position 1402 (C1402) of 16S rRNA. In Brucella abortus (strain S19), this protein is Ribosomal RNA small subunit methyltransferase H.